Consider the following 197-residue polypeptide: Crossover junction endodeoxyribonuclease RuvC (197 aa).

Active-site residues include aspartate 7, glutamate 68, and aspartate 141. 3 residues coordinate Mg(2+): aspartate 7, glutamate 68, and aspartate 141. Composition is skewed to low complexity over residues 165–181 (AAPAAPVSRPAPATPAR) and 188–197 (APARRPAGAS). A disordered region spans residues 165–197 (AAPAAPVSRPAPATPARRSPRPAAPARRPAGAS).

Belongs to the RuvC family. Homodimer which binds Holliday junction (HJ) DNA. The HJ becomes 2-fold symmetrical on binding to RuvC with unstacked arms; it has a different conformation from HJ DNA in complex with RuvA. In the full resolvosome a probable DNA-RuvA(4)-RuvB(12)-RuvC(2) complex forms which resolves the HJ. It depends on Mg(2+) as a cofactor.

The protein resides in the cytoplasm. It catalyses the reaction Endonucleolytic cleavage at a junction such as a reciprocal single-stranded crossover between two homologous DNA duplexes (Holliday junction).. In terms of biological role, the RuvA-RuvB-RuvC complex processes Holliday junction (HJ) DNA during genetic recombination and DNA repair. Endonuclease that resolves HJ intermediates. Cleaves cruciform DNA by making single-stranded nicks across the HJ at symmetrical positions within the homologous arms, yielding a 5'-phosphate and a 3'-hydroxyl group; requires a central core of homology in the junction. The consensus cleavage sequence is 5'-(A/T)TT(C/G)-3'. Cleavage occurs on the 3'-side of the TT dinucleotide at the point of strand exchange. HJ branch migration catalyzed by RuvA-RuvB allows RuvC to scan DNA until it finds its consensus sequence, where it cleaves and resolves the cruciform DNA. The chain is Crossover junction endodeoxyribonuclease RuvC from Frankia alni (strain DSM 45986 / CECT 9034 / ACN14a).